The primary structure comprises 94 residues: Co-chaperonin GroES (94 aa).

This sequence belongs to the GroES chaperonin family. As to quaternary structure, heptamer of 7 subunits arranged in a ring. Interacts with the chaperonin GroEL.

It is found in the cytoplasm. Its function is as follows. Together with the chaperonin GroEL, plays an essential role in assisting protein folding. The GroEL-GroES system forms a nano-cage that allows encapsulation of the non-native substrate proteins and provides a physical environment optimized to promote and accelerate protein folding. GroES binds to the apical surface of the GroEL ring, thereby capping the opening of the GroEL channel. The chain is Co-chaperonin GroES from Bacillus subtilis (strain 168).